Reading from the N-terminus, the 122-residue chain is Large ribosomal subunit protein uL14 (122 aa).

The protein belongs to the universal ribosomal protein uL14 family. As to quaternary structure, part of the 50S ribosomal subunit. Forms a cluster with proteins L3 and L19. In the 70S ribosome, L14 and L19 interact and together make contacts with the 16S rRNA in bridges B5 and B8.

Functionally, binds to 23S rRNA. Forms part of two intersubunit bridges in the 70S ribosome. The protein is Large ribosomal subunit protein uL14 of Clostridium kluyveri (strain ATCC 8527 / DSM 555 / NBRC 12016 / NCIMB 10680 / K1).